We begin with the raw amino-acid sequence, 470 residues long: Putative multidrug resistance protein MdtD (470 aa).

The Periplasmic segment spans residues 1–11 (MTELPDNTRWQ). A helical transmembrane segment spans residues 12–32 (LWIVAFGFFMQSLDTTIVNTA). Over 33–48 (LPSMAKSLGESPLHMH) the chain is Cytoplasmic. The helical transmembrane segment at 49-69 (MVVVSYVLTVAVMLPASGWLA) threads the bilayer. Residues 70–76 (DKIGVRN) are Periplasmic-facing. A helical membrane pass occupies residues 77 to 97 (IFFAAIVLFTLGSLFCALSGT). The Cytoplasmic portion of the chain corresponds to 98-101 (LNQL). A helical membrane pass occupies residues 102–124 (VLARVLQGVGGAMMVPVGRLTVM). The Periplasmic portion of the chain corresponds to 125–137 (KIVPRAQYMAAMT). A helical transmembrane segment spans residues 138-158 (FVTLPGQIGPLLGPALGGVLV). The Cytoplasmic segment spans residues 159-164 (EYASWH). A helical transmembrane segment spans residues 165-185 (WIFLINIPVGIVGAMATFMLM). Residues 186–196 (PNYIIETRRFD) are Periplasmic-facing. The helical transmembrane segment at 197–217 (LPGFLLLAIGMAVLTLALDGS) threads the bilayer. At 218–224 (KSMGISP) the chain is on the cytoplasmic side. The helical transmembrane segment at 225-245 (WTLAGLAAGGAAAILLYLFHA) threads the bilayer. Topologically, residues 246–262 (KKNSGALFSLRLFRTPT) are periplasmic. Residues 263–283 (FSLGLLGSFAGRIGSGMLPFM) form a helical membrane-spanning segment. The Cytoplasmic segment spans residues 284–285 (TP). Residues 286–306 (VFLQIGLGFSPFHAGLMMIPM) traverse the membrane as a helical segment. The Periplasmic portion of the chain corresponds to 307–341 (VLGSMGMKRIVVQIVNRFGYRRVLVATTLGLALVS). Residues 342–362 (LLFMSVALLGWYYLLPLVLLL) traverse the membrane as a helical segment. Over 363–395 (QGMVNSARFSSMNTLTLKDLPDTLASSGNSLLS) the chain is Cytoplasmic. A helical transmembrane segment spans residues 396-416 (MIMQLSMSIGVTIAGMLLGMF). At 417 to 430 (GQQHIGIDSSATHH) the chain is on the periplasmic side. Residues 431-451 (VFMYTWLCMAVIIALPAIIFA) form a helical membrane-spanning segment. The Cytoplasmic portion of the chain corresponds to 452–470 (RVPNDTQQNMVISRRKRSL).

It belongs to the major facilitator superfamily. TCR/Tet family.

The protein localises to the cell inner membrane. The chain is Putative multidrug resistance protein MdtD from Salmonella typhimurium (strain LT2 / SGSC1412 / ATCC 700720).